The sequence spans 171 residues: Shikimate kinase (171 aa).

14–19 (GAGKST) lines the ATP pocket. S18 is a Mg(2+) binding site. 3 residues coordinate substrate: D36, R60, and G82. Residue R120 participates in ATP binding. R139 contributes to the substrate binding site. Q156 provides a ligand contact to ATP.

The protein belongs to the shikimate kinase family. As to quaternary structure, monomer. The cofactor is Mg(2+).

Its subcellular location is the cytoplasm. It catalyses the reaction shikimate + ATP = 3-phosphoshikimate + ADP + H(+). The protein operates within metabolic intermediate biosynthesis; chorismate biosynthesis; chorismate from D-erythrose 4-phosphate and phosphoenolpyruvate: step 5/7. Functionally, catalyzes the specific phosphorylation of the 3-hydroxyl group of shikimic acid using ATP as a cosubstrate. The polypeptide is Shikimate kinase (Shewanella sp. (strain MR-4)).